Consider the following 63-residue polypeptide: Conotoxin Cl14.11 (63 aa).

A signal peptide spans 1 to 21; that stretch reads MRFLLLLTVALLLTCIMETDA. The propeptide occupies 22 to 34; it reads EAKPEDLAERFRE.

In terms of processing, contains 2 disulfide bond. Expressed by the venom duct.

It is found in the secreted. This is Conotoxin Cl14.11 from Californiconus californicus (California cone).